The sequence spans 557 residues: Urocanate hydratase (557 aa).

A disordered region spans residues M1–N20. NAD(+) is bound by residues G52–G53, Q130, G176–G178, E196, R201, N242–A243, Q263–H267, Y273–L274, and Y322. C410 is an active-site residue. G492 contacts NAD(+).

It belongs to the urocanase family. The cofactor is NAD(+).

It localises to the cytoplasm. The catalysed reaction is 4-imidazolone-5-propanoate = trans-urocanate + H2O. The protein operates within amino-acid degradation; L-histidine degradation into L-glutamate; N-formimidoyl-L-glutamate from L-histidine: step 2/3. Catalyzes the conversion of urocanate to 4-imidazolone-5-propionate. The polypeptide is Urocanate hydratase (Brucella melitensis biotype 2 (strain ATCC 23457)).